The sequence spans 39 residues: Omega-theraphotoxin-Ba1b (39 aa).

Intrachain disulfides connect cysteine 4–cysteine 17, cysteine 8–cysteine 31, and cysteine 25–cysteine 36.

This sequence belongs to the neurotoxin 12 (Hwtx-2) family. 06 (TXP1) subfamily. In terms of tissue distribution, expressed by the venom gland.

The protein resides in the secreted. Inhibits voltage-gated calcium channels (Cav) in rat cerebellar granule cells. Has insecticidal activity to crickets (Acheta domesticus). Is not toxic to mice. This is Omega-theraphotoxin-Ba1b from Brachypelma albiceps (Mexican golden redrump tarantula).